A 200-amino-acid polypeptide reads, in one-letter code: MGRLHCTQDPVPEAVGGDMQQLNQLSAQQFSALTEVLFHFLTEPKEVERFLAQLSEFAATNQISLGPLRSIVKSLLLVPNGALKKGLTAEQVRADFMTLGLSEEKAIYFSEKWKQNAPTLARWAVGQTLMINQLVDMEWKFGVTSGSSELEKVGSIFLQLKLVVKKGNQTENVYIELTLPQFYSFLHEMERVRTSMECFS.

Residues Q133 to S200 enclose the COMM domain.

The protein belongs to the COMM domain-containing protein 7 family. Component of the commander complex consisting of the CCC subcomplex and the retriever subcomplex. Component of the CCC (COMMD/CCDC22/CCDC93) subcomplex consisting of COMMD1, COMMD2, COMMD3, COMMD4, COMMD5, COMMD6, COMMD7, COMMD8, COMMD9, COMMD10, CCDC22 and CCDC93; within the complex forms a heterodimer with COMMD9. Interacts with RELA. Interacts with CCDC22, CCDC93, SCNN1B, CUL7.

It localises to the cytoplasmic vesicle. In terms of biological role, scaffold protein in the commander complex that is essential for endosomal recycling of transmembrane cargos; the commander complex is composed of the CCC subcomplex and the retriever subcomplex. May modulate activity of cullin-RING E3 ubiquitin ligase (CRL) complexes. Associates with the NF-kappa-B complex and suppresses its transcriptional activity. The protein is COMM domain-containing protein 7 (COMMD7) of Bos taurus (Bovine).